Reading from the N-terminus, the 487-residue chain is Bifunctional protein HldE (487 aa).

The segment at 1 to 326 (MERREVESFF…QEIVAEVGHG (326 aa)) is ribokinase. An ATP-binding site is contributed by 205-208 (NRKE). D275 is a catalytic residue. The tract at residues 356–487 (FTNGCFDLLH…RIIEKILSSY (132 aa)) is cytidylyltransferase.

It in the N-terminal section; belongs to the carbohydrate kinase PfkB family. In the C-terminal section; belongs to the cytidylyltransferase family. As to quaternary structure, homodimer.

It catalyses the reaction D-glycero-beta-D-manno-heptose 7-phosphate + ATP = D-glycero-beta-D-manno-heptose 1,7-bisphosphate + ADP + H(+). The enzyme catalyses D-glycero-beta-D-manno-heptose 1-phosphate + ATP + H(+) = ADP-D-glycero-beta-D-manno-heptose + diphosphate. Its pathway is nucleotide-sugar biosynthesis; ADP-L-glycero-beta-D-manno-heptose biosynthesis; ADP-L-glycero-beta-D-manno-heptose from D-glycero-beta-D-manno-heptose 7-phosphate: step 1/4. It participates in nucleotide-sugar biosynthesis; ADP-L-glycero-beta-D-manno-heptose biosynthesis; ADP-L-glycero-beta-D-manno-heptose from D-glycero-beta-D-manno-heptose 7-phosphate: step 3/4. In terms of biological role, catalyzes the phosphorylation of D-glycero-D-manno-heptose 7-phosphate at the C-1 position to selectively form D-glycero-beta-D-manno-heptose-1,7-bisphosphate. Its function is as follows. Catalyzes the ADP transfer from ATP to D-glycero-beta-D-manno-heptose 1-phosphate, yielding ADP-D-glycero-beta-D-manno-heptose. In Citrifermentans bemidjiense (strain ATCC BAA-1014 / DSM 16622 / JCM 12645 / Bem) (Geobacter bemidjiensis), this protein is Bifunctional protein HldE.